Consider the following 236-residue polypeptide: Small ribosomal subunit protein uS2c (236 aa).

This sequence belongs to the universal ribosomal protein uS2 family.

The protein localises to the plastid. It localises to the chloroplast. In Gossypium barbadense (Sea Island cotton), this protein is Small ribosomal subunit protein uS2c (rps2).